The sequence spans 491 residues: Protein nucleotidyltransferase YdiU (491 aa).

ATP contacts are provided by Gly94, Gly96, Arg97, Lys117, Asp129, Gly130, Arg180, and Arg187. The Proton acceptor role is filled by Asp256. The Mg(2+) site is built by Asn257 and Asp266. Residue Asp266 participates in ATP binding.

This sequence belongs to the SELO family. Requires Mg(2+) as cofactor. Mn(2+) serves as cofactor.

It catalyses the reaction L-seryl-[protein] + ATP = 3-O-(5'-adenylyl)-L-seryl-[protein] + diphosphate. The enzyme catalyses L-threonyl-[protein] + ATP = 3-O-(5'-adenylyl)-L-threonyl-[protein] + diphosphate. The catalysed reaction is L-tyrosyl-[protein] + ATP = O-(5'-adenylyl)-L-tyrosyl-[protein] + diphosphate. It carries out the reaction L-histidyl-[protein] + UTP = N(tele)-(5'-uridylyl)-L-histidyl-[protein] + diphosphate. It catalyses the reaction L-seryl-[protein] + UTP = O-(5'-uridylyl)-L-seryl-[protein] + diphosphate. The enzyme catalyses L-tyrosyl-[protein] + UTP = O-(5'-uridylyl)-L-tyrosyl-[protein] + diphosphate. Its function is as follows. Nucleotidyltransferase involved in the post-translational modification of proteins. It can catalyze the addition of adenosine monophosphate (AMP) or uridine monophosphate (UMP) to a protein, resulting in modifications known as AMPylation and UMPylation. This chain is Protein nucleotidyltransferase YdiU, found in Clostridium botulinum (strain ATCC 19397 / Type A).